Reading from the N-terminus, the 99-residue chain is Aspartyl/glutamyl-tRNA(Asn/Gln) amidotransferase subunit C (99 aa).

This sequence belongs to the GatC family. As to quaternary structure, heterotrimer of A, B and C subunits.

The catalysed reaction is L-glutamyl-tRNA(Gln) + L-glutamine + ATP + H2O = L-glutaminyl-tRNA(Gln) + L-glutamate + ADP + phosphate + H(+). The enzyme catalyses L-aspartyl-tRNA(Asn) + L-glutamine + ATP + H2O = L-asparaginyl-tRNA(Asn) + L-glutamate + ADP + phosphate + 2 H(+). Functionally, allows the formation of correctly charged Asn-tRNA(Asn) or Gln-tRNA(Gln) through the transamidation of misacylated Asp-tRNA(Asn) or Glu-tRNA(Gln) in organisms which lack either or both of asparaginyl-tRNA or glutaminyl-tRNA synthetases. The reaction takes place in the presence of glutamine and ATP through an activated phospho-Asp-tRNA(Asn) or phospho-Glu-tRNA(Gln). The polypeptide is Aspartyl/glutamyl-tRNA(Asn/Gln) amidotransferase subunit C (Polaromonas naphthalenivorans (strain CJ2)).